Consider the following 323-residue polypeptide: 1D-myo-inositol 2-acetamido-2-deoxy-alpha-D-glucopyranoside deacetylase 1 (323 aa).

The Zn(2+) site is built by histidine 30, aspartate 33, and histidine 165.

Belongs to the MshB deacetylase family. The cofactor is Zn(2+).

It catalyses the reaction 1D-myo-inositol 2-acetamido-2-deoxy-alpha-D-glucopyranoside + H2O = 1D-myo-inositol 2-amino-2-deoxy-alpha-D-glucopyranoside + acetate. Its function is as follows. Catalyzes the deacetylation of 1D-myo-inositol 2-acetamido-2-deoxy-alpha-D-glucopyranoside (GlcNAc-Ins) in the mycothiol biosynthesis pathway. This chain is 1D-myo-inositol 2-acetamido-2-deoxy-alpha-D-glucopyranoside deacetylase 1, found in Catenulispora acidiphila (strain DSM 44928 / JCM 14897 / NBRC 102108 / NRRL B-24433 / ID139908).